The chain runs to 254 residues: Metallo-beta-lactamase type 2 (254 aa).

Residues 1–27 (MMKGWMKCGLAGAVVLMASFWGGSVRA) form the signal peptide. Asp-99 lines the Zn(2+) pocket. Substrate is bound by residues Thr-135 and His-174. Cys-193 provides a ligand contact to Zn(2+). Positions 196 and 201 each coordinate substrate. Residue His-231 participates in Zn(2+) binding.

It belongs to the metallo-beta-lactamase superfamily. Class-B beta-lactamase family. Monomer. The cofactor is Zn(2+).

The protein localises to the periplasm. The enzyme catalyses a beta-lactam + H2O = a substituted beta-amino acid. With respect to regulation, competitively inhibited by mercaptophosphonate and pyridine carboxylate derivatives. Also inhibited by the binding of a second zinc ion and by chelating agents such as EDTA. Its function is as follows. Confers resistance to the different beta-lactams antibiotics (penicillin, cephalosporin and carbapenem) via the hydrolysis of the beta-lactam ring. It is able to hydrolyze penicillin and imipenem, but is much less active against cephalothin, cefotaxime, meropenem and ceftazidime. The chain is Metallo-beta-lactamase type 2 from Aeromonas hydrophila.